A 402-amino-acid polypeptide reads, in one-letter code: MRHTWRWFGPVDKVTVQDAAQAGAEGIVSALHHITTGDVWPVDEITKRHEAIKAGGLYWDVVESVPVSEDIKTQTGDWKNHIANWQETLRRLSASGIRTVCYNFMPVLDWTRTDLRWETRHGARAMRFDLTDFAAFDIHILKRPDAKADYPDWLLEEAAKRFAEMPDTKIAALGRNIGAGLPGSADGYTLAQLLEKLRSYHGINRGRLQQNLIDFLSEVTPVAEEVGINICAHGDDPPWPLLGLPRILSTEADYAHMLSQVDSRANGVTLCTGSLGARADNDLPFIAGRFADRIHFVHLRNVTRDTDTVPCSFFEDEHLEGGTDMVAVIAALITEEARRRAEGRDDHTIPMRPDHGQEILDDLTRGAQPGYPAIGRLKGLAELRGIERTLSHGRFGLATGKG.

The protein belongs to the mannonate dehydratase family. It depends on Fe(2+) as a cofactor. The cofactor is Mn(2+).

It carries out the reaction D-mannonate = 2-dehydro-3-deoxy-D-gluconate + H2O. Its pathway is carbohydrate metabolism; pentose and glucuronate interconversion. In terms of biological role, catalyzes the dehydration of D-mannonate. This Agrobacterium fabrum (strain C58 / ATCC 33970) (Agrobacterium tumefaciens (strain C58)) protein is Mannonate dehydratase 1 (uxuA1).